Reading from the N-terminus, the 438-residue chain is L-cysteine:1D-myo-inositol 2-amino-2-deoxy-alpha-D-glucopyranoside ligase (438 aa).

The segment at 1 to 27 is disordered; the sequence is MDSWTSPDVPALPFTAEGPRVHDTARG. C45 is a binding site for Zn(2+). L-cysteinyl-5'-AMP-binding positions include 45–48, T60, and 83–85; these read CGIT and NVT. The 'HIGH' region signature appears at 47–57; it reads ITPYDATHLGH. Positions 197 to 202 match the 'ERGGDP' region motif; sequence DRGGDP. Residue W238 coordinates L-cysteinyl-5'-AMP. C242 contributes to the Zn(2+) binding site. Residue 260–262 coordinates L-cysteinyl-5'-AMP; that stretch reads GDD. Zn(2+) is bound at residue H267. V293 is an L-cysteinyl-5'-AMP binding site. Residues 299–303 carry the 'KMSKS' region motif; sequence KMSKS.

Belongs to the class-I aminoacyl-tRNA synthetase family. MshC subfamily. In terms of assembly, monomer. It depends on Zn(2+) as a cofactor.

It carries out the reaction 1D-myo-inositol 2-amino-2-deoxy-alpha-D-glucopyranoside + L-cysteine + ATP = 1D-myo-inositol 2-(L-cysteinylamino)-2-deoxy-alpha-D-glucopyranoside + AMP + diphosphate + H(+). In terms of biological role, catalyzes the ATP-dependent condensation of GlcN-Ins and L-cysteine to form L-Cys-GlcN-Ins. In Kytococcus sedentarius (strain ATCC 14392 / DSM 20547 / JCM 11482 / CCUG 33030 / NBRC 15357 / NCTC 11040 / CCM 314 / 541) (Micrococcus sedentarius), this protein is L-cysteine:1D-myo-inositol 2-amino-2-deoxy-alpha-D-glucopyranoside ligase.